The primary structure comprises 248 residues: 4-hydroxy-tetrahydrodipicolinate reductase (248 aa).

Residues aspartate 32, 74 to 76, and 99 to 102 each bind NAD(+); these read GTT and SANF. The active-site Proton donor/acceptor is histidine 134. (S)-2,3,4,5-tetrahydrodipicolinate is bound at residue histidine 135. Lysine 138 functions as the Proton donor in the catalytic mechanism. 144–145 provides a ligand contact to (S)-2,3,4,5-tetrahydrodipicolinate; that stretch reads GT.

The protein belongs to the DapB family.

The protein localises to the cytoplasm. It catalyses the reaction (S)-2,3,4,5-tetrahydrodipicolinate + NAD(+) + H2O = (2S,4S)-4-hydroxy-2,3,4,5-tetrahydrodipicolinate + NADH + H(+). The catalysed reaction is (S)-2,3,4,5-tetrahydrodipicolinate + NADP(+) + H2O = (2S,4S)-4-hydroxy-2,3,4,5-tetrahydrodipicolinate + NADPH + H(+). It participates in amino-acid biosynthesis; L-lysine biosynthesis via DAP pathway; (S)-tetrahydrodipicolinate from L-aspartate: step 4/4. In terms of biological role, catalyzes the conversion of 4-hydroxy-tetrahydrodipicolinate (HTPA) to tetrahydrodipicolinate. In Chlorobium luteolum (strain DSM 273 / BCRC 81028 / 2530) (Pelodictyon luteolum), this protein is 4-hydroxy-tetrahydrodipicolinate reductase.